The primary structure comprises 284 residues: MLIIETLPLLRQHIRRLRQEGKRVALVPTMGNLHDGHMKLVDEAKARADVVIVSIFVNPMQFDRPDDLVRYPRTLQEDCEKLNKRKVDYVFAPAVEEIYPHGLEGQTYVDVPGLSTMLEGASRPGHFRGVSTIVSKLFNLIQPDIACFGEKDFQQLALIRKMVADMSYDIEIVGVPIIRAKDGLALSSRNAYLTAEQRKIAPGLYNVMNRIAEKLIAGNRELQEIIAIAEQELNEKGFRADDIQIRDADTLLELTETSKRAVILAAAWLGQARLIDNQSVTLAQ.

30–37 (MGNLHDGH) provides a ligand contact to ATP. Catalysis depends on H37, which acts as the Proton donor. Q61 lines the (R)-pantoate pocket. Residue Q61 participates in beta-alanine binding. 149-152 (GEKD) contributes to the ATP binding site. Q155 is a binding site for (R)-pantoate. Residues I178 and 186–189 (LSSR) contribute to the ATP site.

Belongs to the pantothenate synthetase family. In terms of assembly, homodimer.

The protein localises to the cytoplasm. It carries out the reaction (R)-pantoate + beta-alanine + ATP = (R)-pantothenate + AMP + diphosphate + H(+). It functions in the pathway cofactor biosynthesis; (R)-pantothenate biosynthesis; (R)-pantothenate from (R)-pantoate and beta-alanine: step 1/1. In terms of biological role, catalyzes the condensation of pantoate with beta-alanine in an ATP-dependent reaction via a pantoyl-adenylate intermediate. The polypeptide is Pantothenate synthetase (Salmonella newport (strain SL254)).